Consider the following 284-residue polypeptide: Shikimate dehydrogenase (NADP(+)) (284 aa).

Residues 20–22 (SIS) and Ser67 contribute to the shikimate site. Residue Lys71 is the Proton acceptor of the active site. Asp83 contributes to the NADP(+) binding site. Asn92 and Asp107 together coordinate shikimate. Residues 129–133 (GAGGA) and Ile227 contribute to the NADP(+) site. Residue Tyr229 coordinates shikimate. Gly250 is a binding site for NADP(+).

This sequence belongs to the shikimate dehydrogenase family. In terms of assembly, homodimer.

The catalysed reaction is shikimate + NADP(+) = 3-dehydroshikimate + NADPH + H(+). Its pathway is metabolic intermediate biosynthesis; chorismate biosynthesis; chorismate from D-erythrose 4-phosphate and phosphoenolpyruvate: step 4/7. Its function is as follows. Involved in the biosynthesis of the chorismate, which leads to the biosynthesis of aromatic amino acids. Catalyzes the reversible NADPH linked reduction of 3-dehydroshikimate (DHSA) to yield shikimate (SA). This chain is Shikimate dehydrogenase (NADP(+)), found in Streptococcus pneumoniae (strain ATCC 700669 / Spain 23F-1).